Here is a 351-residue protein sequence, read N- to C-terminus: Nicotinate-nucleotide--dimethylbenzimidazole phosphoribosyltransferase (351 aa).

Glu318 (proton acceptor) is an active-site residue.

This sequence belongs to the CobT family.

The catalysed reaction is 5,6-dimethylbenzimidazole + nicotinate beta-D-ribonucleotide = alpha-ribazole 5'-phosphate + nicotinate + H(+). The protein operates within nucleoside biosynthesis; alpha-ribazole biosynthesis; alpha-ribazole from 5,6-dimethylbenzimidazole: step 1/2. Its function is as follows. Catalyzes the synthesis of alpha-ribazole-5'-phosphate from nicotinate mononucleotide (NAMN) and 5,6-dimethylbenzimidazole (DMB). This is Nicotinate-nucleotide--dimethylbenzimidazole phosphoribosyltransferase from Shewanella frigidimarina (strain NCIMB 400).